We begin with the raw amino-acid sequence, 601 residues long: Jacalin-related lectin 3 (601 aa).

3 Jacalin-type lectin domains span residues 13 to 155, 240 to 382, and 438 to 583; these read PASL…HTQP, AKTY…HVME, and PSGP…HMQH.

Belongs to the jacalin lectin family.

This Arabidopsis thaliana (Mouse-ear cress) protein is Jacalin-related lectin 3 (JAL3).